Here is a 439-residue protein sequence, read N- to C-terminus: Branched-chain amino acid permease BrnQ (439 aa).

At 1-9 (MTHQLKSRD) the chain is on the cytoplasmic side. The chain crosses the membrane as a helical span at residues 10 to 30 (IIALGFMTFALFVGAGNIIFP). The Periplasmic portion of the chain corresponds to 31 to 43 (PMVGLQAGEHVWT). Residues 44–64 (AAIGFLITAVGLPVLTVVALA) traverse the membrane as a helical segment. Residues 65–79 (KVGGGVDSLSTPIGK) are Cytoplasmic-facing. Residues 80–100 (VAGLLLATVCYLAVGPLFATP) traverse the membrane as a helical segment. Residues 101-118 (RTATVSFEVGIAPLTGDS) lie on the Periplasmic side of the membrane. Residues 119–139 (AMPLLIYSVVYFAIVILVSLY) form a helical membrane-spanning segment. Residues 140–149 (PGKLLDTVGN) are Cytoplasmic-facing. A helical transmembrane segment spans residues 150 to 170 (FLAPLKIIALVILSVAAIVWP). At 171-189 (AGPISNALDAYQNAAFSNG) the chain is on the periplasmic side. The helical transmembrane segment at 190–210 (FVNGYLTMDTLGAMVFGIVIV) threads the bilayer. The Cytoplasmic portion of the chain corresponds to 211 to 226 (NAARSRGVTEARLLTR). The chain crosses the membrane as a helical span at residues 227-247 (YTVWAGLMAGVGLTLLYLALF). The Periplasmic segment spans residues 248–277 (RLGSDSATLVDQSANGAAILHAYVQHTFGG). Residues 278–298 (AGSFLLAALIFIACLVTAVGL) form a helical membrane-spanning segment. The Cytoplasmic segment spans residues 299-316 (TCACAEFFAQYIPLSYRT). A helical membrane pass occupies residues 317–337 (LVFILGGFSMVVSNLGLSHLI). Residue glutamine 338 is a topological domain, periplasmic. Residues 339 to 359 (ISIPVLTAIYPPCIALVVLSF) form a helical membrane-spanning segment. Residues 360-369 (TRSWWHNSTR) are Cytoplasmic-facing. The chain crosses the membrane as a helical span at residues 370–390 (IIAPAMFISLLFGILDGIKAS). At 391 to 404 (AFGDMLPAWSQRLP) the chain is on the periplasmic side. Residues 405–425 (LAEQGLAWLMPTVVMVILAII) form a helical membrane-spanning segment. Residues 426–439 (WDRAAGRQVTSSAH) are Cytoplasmic-facing.

Belongs to the branched chain amino acid transporter family.

It localises to the cell inner membrane. Functionally, liv-II branched chain amino acid transport system, which transports leucine, valine and isoleucine. The protein is Branched-chain amino acid permease BrnQ of Salmonella typhimurium (strain LT2 / SGSC1412 / ATCC 700720).